The primary structure comprises 41 residues: Photosystem II reaction center protein L (41 aa).

The helical transmembrane segment at 20-40 (SLYWGLLLIFVLAVPFSNYFF) threads the bilayer.

The protein belongs to the PsbL family. As to quaternary structure, PSII is composed of 1 copy each of membrane proteins PsbA, PsbB, PsbC, PsbD, PsbE, PsbF, PsbH, PsbI, PsbJ, PsbK, PsbL, PsbM, PsbT, PsbX, PsbY, PsbZ, Psb30/Ycf12, at least 3 peripheral proteins of the oxygen-evolving complex and a large number of cofactors. It forms dimeric complexes.

It localises to the plastid. Its subcellular location is the chloroplast thylakoid membrane. Functionally, one of the components of the core complex of photosystem II (PSII). PSII is a light-driven water:plastoquinone oxidoreductase that uses light energy to abstract electrons from H(2)O, generating O(2) and a proton gradient subsequently used for ATP formation. It consists of a core antenna complex that captures photons, and an electron transfer chain that converts photonic excitation into a charge separation. This subunit is found at the monomer-monomer interface and is required for correct PSII assembly and/or dimerization. In Pinus koraiensis (Korean pine), this protein is Photosystem II reaction center protein L.